Consider the following 323-residue polypeptide: MELFKQVRILSFMRYSNYGVIVSAILVLLALGLLFFKGFSLGIDFAGGSLVQVRYTQNAPIKEVRDLFEKEARFKGVQVSEFGSKEEILIKFPFVETAENEDLNAIVANILKPSGDFEIRKFDTVGPRVGSELKEKGILSLILALIAIMVYVSFRYEWRFALASVVALVHDVILVASSVIVFKIDMNLEVIAALLTLIGYSINDTIIIFDRIREEMLSQKTKNATQAIDEAISSTLTRTLLTSLTVFFVVLILCVFGSKIIIGFSLPMLIGTIVGTYSSIFIAPKVALLLGFDMGKYYENEARKIKKAQEKEKMRRLYEGGQV.

6 helical membrane-spanning segments follow: residues Gly-19–Phe-39, Ile-138–Trp-158, Leu-162–Phe-182, Glu-189–Phe-209, Leu-244–Phe-264, and Leu-269–Leu-289.

Belongs to the SecD/SecF family. SecF subfamily. In terms of assembly, forms a complex with SecD. Part of the essential Sec protein translocation apparatus which comprises SecA, SecYEG and auxiliary proteins SecDF-YajC and YidC.

The protein localises to the cell inner membrane. Functionally, part of the Sec protein translocase complex. Interacts with the SecYEG preprotein conducting channel. SecDF uses the proton motive force (PMF) to complete protein translocation after the ATP-dependent function of SecA. The polypeptide is Protein translocase subunit SecF (Helicobacter pylori (strain J99 / ATCC 700824) (Campylobacter pylori J99)).